A 312-amino-acid polypeptide reads, in one-letter code: MEKKKIGLLVMAYGTPYKEEDIEPYYTHIRHGRKPDPEALQDLKERYEAIGGISPLAKITEEQTKALEKKLNANQDQYEFKAYIGLKHIHPFIEDTVEEMAKDGIKEAISLVLAPHYSTFSVKSYNKRANETAEKYGIQLDSVEDWYTEPGFIKFWADGIKATYAEMTEEERNNSVLIVSAHSLPEKILKDGDPYKHQLEETAKLIVEEADVKNYAVGWQSEGNTPDPWLGPDVQDLTRELYESEGYKAFIYTPVGFVADHLEVLYDNDYECKVVCDEIGASYYRPDMPNVHPEFIETLANVVMKKAKSEVR.

Residues Tyr-13, Arg-30, 46-47, Ser-54, and Tyr-125 each bind Fe-coproporphyrin III; that span reads RY. Fe(2+)-binding residues include His-182 and Glu-263.

This sequence belongs to the ferrochelatase family.

It localises to the cytoplasm. It catalyses the reaction Fe-coproporphyrin III + 2 H(+) = coproporphyrin III + Fe(2+). The protein operates within porphyrin-containing compound metabolism; protoheme biosynthesis. Functionally, involved in coproporphyrin-dependent heme b biosynthesis. Catalyzes the insertion of ferrous iron into coproporphyrin III to form Fe-coproporphyrin III. This is Coproporphyrin III ferrochelatase from Oceanobacillus iheyensis (strain DSM 14371 / CIP 107618 / JCM 11309 / KCTC 3954 / HTE831).